The chain runs to 1024 residues: Non-canonical nonribosomal peptide synthetase FrzA (1024 aa).

An adenylation (A) domain region spans residues 29–425; it reads RAQKSHQAIA…GRRDHQVKVR (397 aa). The Carrier domain maps to 534 to 611; it reads NASQDVRSAL…ALTSIIKQRL (78 aa). At serine 571 the chain carries O-(pantetheine 4'-phosphoryl)serine. The region spanning 655-898 is the Thioester reductase (TE) domain; the sequence is LTGGTGFVGA…VPVDYVNAAI (244 aa).

This sequence belongs to the NRP synthetase family. Requires pantetheine 4'-phosphate as cofactor.

The catalysed reaction is L-tyrosinal + AMP + diphosphate + NADP(+) = L-tyrosine + ATP + NADPH + H(+). It participates in secondary metabolite biosynthesis. In terms of biological role, non-canonical nonribosomal peptide synthetase; part of the gene cluster that mediates the biosynthesis of the alkaloid (-)-FR901483, a potent immunosuppressant that shows efficacy in animal models and a probable inhibitor of purine nucleotide biosynthesis by targeting phosphoribosylpyrophosphate amidotransferase (PPAT). Within the pathway, FrzA catalyzes the reduction of L-tyrosine via its C-terminal reductase domain to produce L-tyrosinal. The biosynthesis of (-)-FR901483 starts with the condensation of two L-tyrosines to yield (S,S)-dityrosyl-piperazine. This process occurs in 3 steps with the non-canonical nonribosomal peptide synthetase FrzA catalyzing the reduction of L-tyrosine into L-tyrosinal, the spontaneous condensation of 2 L-tyrosinal units, and the subsequent reduction by the NmrA-like family domain-containing oxidoreductase FrzB. The cytochrome P450 monooxygenase FrzC then performs coupling between N10 and C1' to morph the piperazine into a 1,4-diazabicyclo[3.2.1]octane spiro-fused to a 2,5-cyclohexadienone. The dienone portion is further reduced to cyclohexanone by the flavin-dependent reductase FrzD. The methyltranserases (MTs) FrzE and FrzF are then involved in the methylation at the C10' amine and the C4 phenolic oxygen, respectively. The order of the two MTs appear to be interchangeable. Cleavage of the C9-N10' bond by the dioxygenase FrzG then leads to formation of a conjugated iminium. In addition to the oxidation of C9, an additional dehydrogenation between C7 and C8 can occur to give a likely shunt product. The next biosynthetic step is the intramolecular aldol condensation catalyzed by the newly identified aldolase FrzH to yield an aza-tricyclic product with the formation of a C9-C3' bond. The short-chain dehydrogenase/reductase FrzI then produces dephospho-(-)-FR901483 that is phosphorylated at C4'-OH into (-)-FR901483 by the phosphotransferase FrzJ. This Cladobotryum sp protein is Non-canonical nonribosomal peptide synthetase FrzA.